The sequence spans 426 residues: Histidine--tRNA ligase (426 aa).

Belongs to the class-II aminoacyl-tRNA synthetase family. As to quaternary structure, homodimer.

The protein localises to the cytoplasm. It carries out the reaction tRNA(His) + L-histidine + ATP = L-histidyl-tRNA(His) + AMP + diphosphate + H(+). The polypeptide is Histidine--tRNA ligase (Legionella pneumophila (strain Paris)).